The primary structure comprises 341 residues: Brain-specific homeobox/POU domain protein 3 (341 aa).

The POU-IV box signature appears at 55-65 (RGAEALAAVDI). The 78-residue stretch at 182–259 (ETETDPRELE…ILEAWLEEAE (78 aa)) folds into the POU-specific domain. The homeobox DNA-binding region spans 277–336 (KKRKRTSIAAPEKRSLEAYFAVQPRPSSEKIAAIAEKLDLKKNVVRVWFCNQRQKQKRMK).

The protein belongs to the POU transcription factor family. Class-4 subfamily.

It is found in the nucleus. In terms of biological role, may play a role in specifying terminally differentiated neuronal phenotypes. The chain is Brain-specific homeobox/POU domain protein 3 (BRN3) from Gallus gallus (Chicken).